We begin with the raw amino-acid sequence, 377 residues long: ATP-dependent (S)-NAD(P)H-hydrate dehydratase (377 aa).

One can recognise a YjeF C-terminal domain in the interval 10–366 (LLHLSRQLIQ…EYLHESFTEL (357 aa)). Residues Gly148 and 201-207 (NVVEFQR) each bind (6S)-NADPHX. Residues 245 to 249 (KGEHD) and 264 to 273 (GSNKRVGGQG) each bind ATP. Residue Asp274 participates in (6S)-NADPHX binding.

This sequence belongs to the NnrD/CARKD family. Mg(2+) is required as a cofactor.

The protein resides in the cytoplasm. It catalyses the reaction (6S)-NADHX + ATP = ADP + phosphate + NADH + H(+). The enzyme catalyses (6S)-NADPHX + ATP = ADP + phosphate + NADPH + H(+). Catalyzes the dehydration of the S-form of NAD(P)HX at the expense of ATP, which is converted to ADP. Together with NAD(P)HX epimerase, which catalyzes the epimerization of the S- and R-forms, the enzyme allows the repair of both epimers of NAD(P)HX, a damaged form of NAD(P)H that is a result of enzymatic or heat-dependent hydration. The chain is ATP-dependent (S)-NAD(P)H-hydrate dehydratase from Candida albicans (strain SC5314 / ATCC MYA-2876) (Yeast).